The primary structure comprises 544 residues: Chaperonin GroEL (544 aa).

Residues 29–32 (TLGP), 86–90 (DGTTT), G413, 476–478 (NAA), and D492 contribute to the ATP site.

It belongs to the chaperonin (HSP60) family. Forms a cylinder of 14 subunits composed of two heptameric rings stacked back-to-back. Interacts with the co-chaperonin GroES.

It localises to the cytoplasm. It carries out the reaction ATP + H2O + a folded polypeptide = ADP + phosphate + an unfolded polypeptide.. Together with its co-chaperonin GroES, plays an essential role in assisting protein folding. The GroEL-GroES system forms a nano-cage that allows encapsulation of the non-native substrate proteins and provides a physical environment optimized to promote and accelerate protein folding. In Bacillus thuringiensis (strain Al Hakam), this protein is Chaperonin GroEL.